The chain runs to 65 residues: Large ribosomal subunit protein bL31 (65 aa).

Zn(2+) contacts are provided by Cys16, Cys18, Cys36, and Cys39.

This sequence belongs to the bacterial ribosomal protein bL31 family. Type A subfamily. As to quaternary structure, part of the 50S ribosomal subunit. Zn(2+) is required as a cofactor.

Binds the 23S rRNA. In Carboxydothermus hydrogenoformans (strain ATCC BAA-161 / DSM 6008 / Z-2901), this protein is Large ribosomal subunit protein bL31.